The following is a 134-amino-acid chain: Profilin-2 (134 aa).

Cysteine 13 and cysteine 118 are disulfide-bonded. Residues 84–100 (AVIRGKKGSGGITIKKT) carry the Involved in PIP2 interaction motif. Position 114 is a phosphothreonine (threonine 114).

This sequence belongs to the profilin family. In terms of assembly, occurs in many kinds of cells as a complex with monomeric actin in a 1:1 ratio. Phosphorylated by MAP kinases.

Its subcellular location is the cytoplasm. It is found in the cytoskeleton. Its function is as follows. Binds to actin and affects the structure of the cytoskeleton. At high concentrations, profilin prevents the polymerization of actin, whereas it enhances it at low concentrations. By binding to PIP2, it inhibits the formation of IP3 and DG. The polypeptide is Profilin-2 (PRO2) (Olea europaea (Common olive)).